Consider the following 127-residue polypeptide: Glycine cleavage system H protein (127 aa).

Residues 22–104 (EVVIGITHFA…YEGAWMVKVE (83 aa)) enclose the Lipoyl-binding domain. The residue at position 63 (lysine 63) is an N6-lipoyllysine.

It belongs to the GcvH family. As to quaternary structure, the glycine cleavage system is composed of four proteins: P, T, L and H. It depends on (R)-lipoate as a cofactor.

Functionally, the glycine cleavage system catalyzes the degradation of glycine. The H protein shuttles the methylamine group of glycine from the P protein to the T protein. In terms of biological role, is also involved in protein lipoylation via its role as an octanoyl/lipoyl carrier protein intermediate. The protein is Glycine cleavage system H protein of Bacillus cereus (strain ZK / E33L).